A 262-amino-acid polypeptide reads, in one-letter code: Putative hydro-lyase Cbei_2760 (262 aa).

This sequence belongs to the D-glutamate cyclase family.

In Clostridium beijerinckii (strain ATCC 51743 / NCIMB 8052) (Clostridium acetobutylicum), this protein is Putative hydro-lyase Cbei_2760.